The chain runs to 367 residues: Serine O-succinyltransferase (367 aa).

Residues 41 to 351 (NAVLILTGLS…SPQGHDAFLV (311 aa)) form the AB hydrolase-1 domain. Residues 48–51 (GLSP) form an important for substrate specificity region. The Nucleophile role is filled by Ser146. A substrate-binding site is contributed by Arg215. Active-site residues include Asp313 and His346. A substrate-binding site is contributed by Asp347.

Belongs to the AB hydrolase superfamily. MetX family. Homodimer.

The protein localises to the cytoplasm. It catalyses the reaction succinyl-CoA + L-serine = O-succinyl-L-serine + CoA. It carries out the reaction L-homoserine + succinyl-CoA = O-succinyl-L-homoserine + CoA. Its pathway is amino-acid biosynthesis; L-cysteine biosynthesis; L-cysteine from L-serine: step 1/2. Its function is as follows. Transfers a succinyl group from succinyl-CoA to L-serine, forming succinyl-L-serine. In vitro, also has homoserine succinyl transferase activity. The chain is Serine O-succinyltransferase from Frateuria aurantia (strain ATCC 33424 / DSM 6220 / KCTC 2777 / LMG 1558 / NBRC 3245 / NCIMB 13370) (Acetobacter aurantius).